The following is a 199-amino-acid chain: Recombination protein RecR (199 aa).

The C4-type zinc finger occupies 58 to 73 (CQRCFHLSSEDLCNIC). The Toprim domain maps to 81 to 175 (QTICVVADPR…RVTRIAFGLP (95 aa)).

This sequence belongs to the RecR family.

Its function is as follows. May play a role in DNA repair. It seems to be involved in an RecBC-independent recombinational process of DNA repair. It may act with RecF and RecO. This is Recombination protein RecR from Synechococcus elongatus (strain ATCC 33912 / PCC 7942 / FACHB-805) (Anacystis nidulans R2).